A 179-amino-acid polypeptide reads, in one-letter code: Ribosome maturation factor RimM (179 aa).

Residues 100-176 enclose the PRC barrel domain; that stretch reads HGEYHLTELI…FILLTPPSGL (77 aa).

It belongs to the RimM family. As to quaternary structure, binds ribosomal protein uS19.

The protein resides in the cytoplasm. Its function is as follows. An accessory protein needed during the final step in the assembly of 30S ribosomal subunit, possibly for assembly of the head region. Essential for efficient processing of 16S rRNA. May be needed both before and after RbfA during the maturation of 16S rRNA. It has affinity for free ribosomal 30S subunits but not for 70S ribosomes. This is Ribosome maturation factor RimM from Prochlorococcus marinus subsp. pastoris (strain CCMP1986 / NIES-2087 / MED4).